The primary structure comprises 255 residues: tRNA (guanine-N(1)-)-methyltransferase (255 aa).

S-adenosyl-L-methionine-binding positions include Gly-113 and 133-138; that span reads IGDYVL.

Belongs to the RNA methyltransferase TrmD family. Homodimer.

Its subcellular location is the cytoplasm. It carries out the reaction guanosine(37) in tRNA + S-adenosyl-L-methionine = N(1)-methylguanosine(37) in tRNA + S-adenosyl-L-homocysteine + H(+). Its function is as follows. Specifically methylates guanosine-37 in various tRNAs. This Salmonella choleraesuis (strain SC-B67) protein is tRNA (guanine-N(1)-)-methyltransferase.